We begin with the raw amino-acid sequence, 103 residues long: UPF0145 protein BLi01945/BL05168 (103 aa).

This sequence belongs to the UPF0145 family.

The protein is UPF0145 protein BLi01945/BL05168 of Bacillus licheniformis (strain ATCC 14580 / DSM 13 / JCM 2505 / CCUG 7422 / NBRC 12200 / NCIMB 9375 / NCTC 10341 / NRRL NRS-1264 / Gibson 46).